Consider the following 282-residue polypeptide: Bis(5'-nucleosyl)-tetraphosphatase, symmetrical (282 aa).

This sequence belongs to the Ap4A hydrolase family.

It carries out the reaction P(1),P(4)-bis(5'-adenosyl) tetraphosphate + H2O = 2 ADP + 2 H(+). Its function is as follows. Hydrolyzes diadenosine 5',5'''-P1,P4-tetraphosphate to yield ADP. This chain is Bis(5'-nucleosyl)-tetraphosphatase, symmetrical, found in Sodalis glossinidius (strain morsitans).